A 218-amino-acid polypeptide reads, in one-letter code: Phosphoglycolate phosphatase (218 aa).

Residue Asp-7 is the Nucleophile of the active site. Residues Asp-7, Asp-9, and Asp-167 each coordinate Mg(2+).

This sequence belongs to the HAD-like hydrolase superfamily. CbbY/CbbZ/Gph/YieH family. Mg(2+) is required as a cofactor.

The catalysed reaction is 2-phosphoglycolate + H2O = glycolate + phosphate. It participates in organic acid metabolism; glycolate biosynthesis; glycolate from 2-phosphoglycolate: step 1/1. Its function is as follows. Specifically catalyzes the dephosphorylation of 2-phosphoglycolate. Is involved in the dissimilation of the intracellular 2-phosphoglycolate formed during the DNA repair of 3'-phosphoglycolate ends, a major class of DNA lesions induced by oxidative stress. This chain is Phosphoglycolate phosphatase, found in Cereibacter sphaeroides (strain ATCC 17029 / ATH 2.4.9) (Rhodobacter sphaeroides).